Consider the following 445-residue polypeptide: MTNKLRSEETITSLSSFMASTLSIASPSPCSIPLSVTKVSPLKRKRPTHLNIPDLNPQQPISTDYFRFREGDAKVSPLKRKRPAHLNIPDLNPQQPIRTDYFSFTDFAHQNGTVSFGGNGFGVVSRNGKKKFMEDTHRIVPCLVGNSKKSFFGVYDGHGGAKAAEFVAENLHKYVVEMMENCKGKEEKVEAFKAAFLRTDRDFLEKGVVSGACCVTAVIQDQEMIVSNLGDCRAVLCRAGVAEALTDDHKPGRDDEKERIESQGGYVDNHQGAWRVQGILAVSRSIGDAHLKKWVVAEPETRVLELEQDMEFLVLASDGLWDVVSNQEAVYTVLHVLAQRKTPKESEEENLVQGFVNMSPSSKLRRASLVKSPRCAKSQSYYYNSENESPSLNREIGSSPSKSPITPWKSLWAKAACKELANLAAKRGSMDDITVVIIDLNHYKG.

One can recognise a PPM-type phosphatase domain in the interval 120-440; sequence GFGVVSRNGK…DDITVVIIDL (321 aa). Residues D156, G157, and D318 each contribute to the Mn(2+) site. The segment at 384 to 404 is disordered; sequence NSENESPSLNREIGSSPSKSP. The span at 390–404 shows a compositional bias: polar residues; that stretch reads PSLNREIGSSPSKSP. Mn(2+) is bound at residue D431.

The protein belongs to the PP2C family. It depends on Mg(2+) as a cofactor. Requires Mn(2+) as cofactor.

It catalyses the reaction O-phospho-L-seryl-[protein] + H2O = L-seryl-[protein] + phosphate. It carries out the reaction O-phospho-L-threonyl-[protein] + H2O = L-threonyl-[protein] + phosphate. The sequence is that of Probable protein phosphatase 2C 14 from Arabidopsis thaliana (Mouse-ear cress).